The following is a 219-amino-acid chain: Mediator of RNA polymerase II transcription subunit 18 (219 aa).

Belongs to the Mediator complex subunit 18 family. In terms of assembly, component of the Mediator complex. Interacts with YY1 to suppress disease susceptibility via the repression of genes glutaredoxins GRX480, GRXS13 and thioredoxin TRX-h5. Binds to ABI4 to regulate abscisic acid responses; recruited by ABI4 to ABI5 promoter in the presence of abscisic acid (ABA). Interacts with SUF4 to regulate flowering time; recruited by SUF4 to FLC promoter.

It localises to the nucleus. Functionally, component of the Mediator complex, a coactivator involved in the regulated transcription of nearly all RNA polymerase II-dependent genes. Mediator functions as a bridge to convey information from gene-specific regulatory proteins to the basal RNA polymerase II transcription machinery. The Mediator complex, having a compact conformation in its free form, is recruited to promoters by direct interactions with regulatory proteins and serves for the assembly of a functional pre-initiation complex with RNA polymerase II and the general transcription factors. Involved in the regulation of histone H3 lysine tri-methylation (H3K36me3). Associates with the promoter, coding and terminator regions of target genes suggesting its function in transcription initiation, elongation and termination. Multifunctional protein which regulates plant immunity, especially during necrotrophic fungal infection (e.g. B.cinerea and A.brassicicola), flowering time and responses to hormones (e.g. abscisic acid ABA and ethylene) through interactions with distinct transcription factors. This Arabidopsis thaliana (Mouse-ear cress) protein is Mediator of RNA polymerase II transcription subunit 18.